The following is a 2471-amino-acid chain: Histidine protein kinase 1 (2471 aa).

Positions 1–10 are enriched in polar residues; sequence MSMNFFNSSE. Disordered regions lie at residues 1–30, 52–75, and 395–415; these read MSMN…TEHY, ETKK…VPPS, and RQGS…FNIG. Positions 11–30 are enriched in basic and acidic residues; sequence PARDHKPDQEKETVMTTEHY. One can recognise a Protein kinase domain in the interval 358–636; the sequence is EHPSQSTDQK…DCHSLLHDLI (279 aa). One can recognise a Histidine kinase domain in the interval 2004-2225; sequence NMSHEIRTPF…TFYVSVIMDA (222 aa). His2007 is modified (phosphohistidine; by autocatalysis). A Response regulatory domain is found at 2340-2466; sequence RILLAEDNLL…ELRRILTKVG (127 aa). Asp2394 bears the 4-aspartylphosphate mark.

The phosphorelay mechanism involves the sequential transfer of a phosphate group from His-2007 (H1) in the histidine kinase domain (transmitter domain) to Asp-2394 (D1) of the response regulatory domain (receiver domain). This transfer probably occurs between two CHK1 molecules, rather than intramolecularly.

The enzyme catalyses ATP + protein L-histidine = ADP + protein N-phospho-L-histidine.. In terms of biological role, histidine kinase involved in a two-component signaling pathway that regulates cell wall mannan and glucan biosynthesis. Regulates quorum sensing as well as hyphal formation, biofilm formation, chlamidospore formation, and virulence. Plays a prominent role in phagocyte activation. Involved in the covering of the most potent pro-inflammatory cell wall molecules, the beta-glucans, underneath a dense mannan layer, so that the pathogen becomes partly invisible for immune cells such as phagocytes. This Candida albicans (strain SC5314 / ATCC MYA-2876) (Yeast) protein is Histidine protein kinase 1 (CHK1).